The primary structure comprises 489 residues: UBX domain-containing protein 7 (489 aa).

An N-acetylalanine modification is found at alanine 2. Residues 2–54 enclose the UBA domain; the sequence is AAHGGSAASSALKGLIQQFTTITGASESVGKHMLEACNNNLEMAVTMFLDGGG. Residues 56-77 are disordered; the sequence is AEEPSTSSASVSTVRPHTEEEV. Polar residues predominate over residues 59–70; sequence PSTSSASVSTVR. Residue lysine 84 forms a Glycyl lysine isopeptide (Lys-Gly) (interchain with G-Cter in SUMO2) linkage. Lysine 99 is covalently cross-linked (Glycyl lysine isopeptide (Lys-Gly) (interchain with G-Cter in ubiquitin)). Lysine 134 is covalently cross-linked (Glycyl lysine isopeptide (Lys-Gly) (interchain with G-Cter in SUMO2)). Residues serine 278, serine 280, serine 285, and serine 288 each carry the phosphoserine modification. The region spanning 285–304 is the UIM domain; the sequence is SEDSQLEAAIRASLQETHFD. Over residues 300 to 309 the composition is skewed to polar residues; it reads ETHFDSTQTK. The tract at residues 300-384 is disordered; it reads ETHFDSTQTK…PGTATNHQGL (85 aa). Threonine 306 carries the post-translational modification Phosphothreonine. A compositionally biased stretch (basic and acidic residues) spans 352 to 366; sequence HKDLGHRKEENRRPL. The region spanning 408–485 is the UBX domain; sequence VNGPKAQLML…GLCPQETVFV (78 aa).

As to quaternary structure, interacts with neddylated CUL2, ubiquitinated HIF1A, and VCP/p97.

It localises to the nucleus. Functionally, ubiquitin-binding adapter that links a subset of NEDD8-associated cullin ring ligases (CRLs) to the segregase VCP/p97, to regulate turnover of their ubiquitination substrates. The protein is UBX domain-containing protein 7 (UBXN7) of Homo sapiens (Human).